The following is a 320-amino-acid chain: Prophage side tail fiber protein homolog StfQ (320 aa).

2 disordered regions span residues 147 to 213 (SGRA…HKSS) and 241 to 270 (TTSGSGQTRNAGKTSSDGAHTHSLSGTAAS). Composition is skewed to polar residues over residues 172–206 (DLGTETTSSFDYGTKSTNNTGAHTHSISGTANSAG) and 241–258 (TTSGSGQTRNAGKTSSDG). The segment covering 261–270 (THSLSGTAAS) has biased composition (low complexity).

This sequence belongs to the tail fiber family.

In Escherichia coli (strain K12), this protein is Prophage side tail fiber protein homolog StfQ (stfQ).